The primary structure comprises 283 residues: 4-hydroxy-3-methylbut-2-enyl diphosphate reductase (283 aa).

Residue cysteine 12 participates in [4Fe-4S] cluster binding. Positions 40 and 73 each coordinate (2E)-4-hydroxy-3-methylbut-2-enyl diphosphate. Residues histidine 40 and histidine 73 each contribute to the dimethylallyl diphosphate site. Isopentenyl diphosphate-binding residues include histidine 40 and histidine 73. Cysteine 95 is a binding site for [4Fe-4S] cluster. Histidine 123 lines the (2E)-4-hydroxy-3-methylbut-2-enyl diphosphate pocket. Histidine 123 is a binding site for dimethylallyl diphosphate. Position 123 (histidine 123) interacts with isopentenyl diphosphate. The active-site Proton donor is the glutamate 125. Threonine 161 contributes to the (2E)-4-hydroxy-3-methylbut-2-enyl diphosphate binding site. Residue cysteine 189 coordinates [4Fe-4S] cluster. Residues serine 217, asparagine 219, and serine 261 each coordinate (2E)-4-hydroxy-3-methylbut-2-enyl diphosphate. Dimethylallyl diphosphate contacts are provided by serine 217, asparagine 219, and serine 261. Residues serine 217, asparagine 219, and serine 261 each coordinate isopentenyl diphosphate.

Belongs to the IspH family. [4Fe-4S] cluster is required as a cofactor.

It catalyses the reaction isopentenyl diphosphate + 2 oxidized [2Fe-2S]-[ferredoxin] + H2O = (2E)-4-hydroxy-3-methylbut-2-enyl diphosphate + 2 reduced [2Fe-2S]-[ferredoxin] + 2 H(+). The catalysed reaction is dimethylallyl diphosphate + 2 oxidized [2Fe-2S]-[ferredoxin] + H2O = (2E)-4-hydroxy-3-methylbut-2-enyl diphosphate + 2 reduced [2Fe-2S]-[ferredoxin] + 2 H(+). Its pathway is isoprenoid biosynthesis; dimethylallyl diphosphate biosynthesis; dimethylallyl diphosphate from (2E)-4-hydroxy-3-methylbutenyl diphosphate: step 1/1. It functions in the pathway isoprenoid biosynthesis; isopentenyl diphosphate biosynthesis via DXP pathway; isopentenyl diphosphate from 1-deoxy-D-xylulose 5-phosphate: step 6/6. Catalyzes the conversion of 1-hydroxy-2-methyl-2-(E)-butenyl 4-diphosphate (HMBPP) into a mixture of isopentenyl diphosphate (IPP) and dimethylallyl diphosphate (DMAPP). Acts in the terminal step of the DOXP/MEP pathway for isoprenoid precursor biosynthesis. This chain is 4-hydroxy-3-methylbut-2-enyl diphosphate reductase, found in Geobacter sp. (strain M21).